Here is a 120-residue protein sequence, read N- to C-terminus: Acyl carrier protein, mitochondrial (120 aa).

The region spanning Lys43–Pro117 is the Carrier domain. Ser77 carries the post-translational modification O-(pantetheine 4'-phosphoryl)serine.

This sequence belongs to the acyl carrier protein (ACP) family. In terms of assembly, complex I is composed of about 45 different subunits. 4'-phosphopantetheine is transferred from CoA to a specific serine of apo-ACP by acpS. This modification is essential for activity because fatty acids are bound in thioester linkage to the sulfhydryl of the prosthetic group.

The protein resides in the mitochondrion. It functions in the pathway lipid metabolism; fatty acid biosynthesis. Carrier of the growing fatty acid chain in fatty acid biosynthesis. May be involved in the synthesis of very-long-chain fatty acids. Accessory and non-catalytic subunit of the mitochondrial membrane respiratory chain NADH dehydrogenase (Complex I), which functions in the transfer of electrons from NADH to the respiratory chain. In Dictyostelium discoideum (Social amoeba), this protein is Acyl carrier protein, mitochondrial (ndufab1).